A 637-amino-acid polypeptide reads, in one-letter code: SCF-associated factor 1 (637 aa).

Positions 14-63 constitute an F-box domain; that stretch reads GLSPDIVQATLPFLSSDDIKNLSQTNKYYNTLLDFDHSKILWHELFHKAF. The residue at position 16 (Ser16) is a Phosphoserine. One copy of the RCC1 1 repeat lies at 109 to 202; sequence AKFYSWGYLK…GFSFQILTES (94 aa). Residues 242 to 315 form a disordered region; sequence YPRITSRSNG…RTTMPSMGPH (74 aa). Over residues 244-260 the composition is skewed to polar residues; sequence RITSRSNGSTVNTTGTF. Ser266 bears the Phosphoserine mark. Low complexity predominate over residues 289–305; the sequence is SGGAPAASPGGSHSGVP. The RCC1 2 repeat unit spans residues 565 to 635; it reads GHLYSWGIES…GWQTGALIIK (71 aa).

In terms of assembly, interacts with AAH1, SKP1 and CDC53. Component of the SCF(SAF1) complex containing CDC53, SKP1, HRT1 and SAF1.

The protein operates within protein modification; protein ubiquitination. Functionally, substrate recognition component of a SCF (SKP1-CUL1-F-box protein) E3 ubiquitin-protein ligase complex which mediates the ubiquitination and subsequent proteasomal degradation of target proteins. Targets AAH1 adenine deaminase for proteasome-dependent degradation upon entry into quiescence. Targets also URA7. This chain is SCF-associated factor 1 (SAF1), found in Saccharomyces cerevisiae (strain ATCC 204508 / S288c) (Baker's yeast).